A 462-amino-acid chain; its full sequence is Glutamate--tRNA ligase (462 aa).

The 'HIGH' region signature appears at 11–21 (PSPTGFIHLGN). The 'KMSKS' region motif lies at 243–247 (KMSKR). Lys-246 contacts ATP.

This sequence belongs to the class-I aminoacyl-tRNA synthetase family. Glutamate--tRNA ligase type 1 subfamily. Monomer.

The protein localises to the cytoplasm. It catalyses the reaction tRNA(Glu) + L-glutamate + ATP = L-glutamyl-tRNA(Glu) + AMP + diphosphate. In terms of biological role, catalyzes the attachment of glutamate to tRNA(Glu) in a two-step reaction: glutamate is first activated by ATP to form Glu-AMP and then transferred to the acceptor end of tRNA(Glu). The chain is Glutamate--tRNA ligase from Albidiferax ferrireducens (strain ATCC BAA-621 / DSM 15236 / T118) (Rhodoferax ferrireducens).